The primary structure comprises 186 residues: Negative modulator of initiation of replication (186 aa).

Belongs to the SeqA family. Homodimer. Polymerizes to form helical filaments.

It localises to the cytoplasm. Negative regulator of replication initiation, which contributes to regulation of DNA replication and ensures that replication initiation occurs exactly once per chromosome per cell cycle. Binds to pairs of hemimethylated GATC sequences in the oriC region, thus preventing assembly of replication proteins and re-initiation at newly replicated origins. Repression is relieved when the region becomes fully methylated. In Haemophilus ducreyi (strain 35000HP / ATCC 700724), this protein is Negative modulator of initiation of replication.